Reading from the N-terminus, the 480-residue chain is Acyl-lipid (8-3)-desaturase (480 aa).

The interval 1 to 30 (MAPHSADTAGLVPSDELRLRTSNSKGPEQE) is disordered. Positions 33-107 (LKKYTLEDVS…LAKYCIGELV (75 aa)) constitute a Cytochrome b5 heme-binding domain. His68 and His90 together coordinate heme. Helical transmembrane passes span 151 to 171 (IHPHMILKSLFILGGYFASYY) and 173 to 193 (AFFWSSSVLVSLFFALWMGFF). A Histidine box-1 motif is present at residues 203-207 (HDGNH). Positions 238–243 (HVVGHH) match the Histidine box-2 motif. The next 3 membrane-spanning stretches (helical) occupy residues 280 to 300 (IYLAVLYGTLALKSIFLDDFL), 322 to 342 (IFFQGKLLYAFYMFVLPSVYG), and 348 to 368 (TFLALYVASQLITGWMLAFLF). Residues 419–423 (QIEHH) carry the Histidine box-3 motif.

The protein belongs to the fatty acid desaturase type 1 family. Requires Fe(2+) as cofactor.

The protein localises to the membrane. The catalysed reaction is an (8Z,11Z,14Z)-icosatrienoyl-containing glycerolipid + 2 Fe(II)-[cytochrome b5] + O2 + 2 H(+) = (5Z,8Z,11Z,14Z)-eicosatetraenoyl-containing glycerolipid + 2 Fe(III)-[cytochrome b5] + 2 H2O. It catalyses the reaction an (8Z,11Z,14Z,17Z)-eicosatetraenoyl-containing glycerolipid + 2 Fe(II)-[cytochrome b5] + O2 + 2 H(+) = a (5Z,8Z,11Z,14Z,17Z)-eicosapentaenoyl-containing glycerolipid + 2 Fe(III)-[cytochrome b5] + 2 H2O. Functionally, fatty acid desaturase that introduces a cis double bond at the 5-position in 20-carbon polyunsaturated fatty acids incorporated in a glycerolipid that contain a Delta(8) double bond. The chain is Acyl-lipid (8-3)-desaturase from Physcomitrium patens (Spreading-leaved earth moss).